The sequence spans 153 residues: SsrA-binding protein (153 aa).

This sequence belongs to the SmpB family.

The protein localises to the cytoplasm. Required for rescue of stalled ribosomes mediated by trans-translation. Binds to transfer-messenger RNA (tmRNA), required for stable association of tmRNA with ribosomes. tmRNA and SmpB together mimic tRNA shape, replacing the anticodon stem-loop with SmpB. tmRNA is encoded by the ssrA gene; the 2 termini fold to resemble tRNA(Ala) and it encodes a 'tag peptide', a short internal open reading frame. During trans-translation Ala-aminoacylated tmRNA acts like a tRNA, entering the A-site of stalled ribosomes, displacing the stalled mRNA. The ribosome then switches to translate the ORF on the tmRNA; the nascent peptide is terminated with the 'tag peptide' encoded by the tmRNA and targeted for degradation. The ribosome is freed to recommence translation, which seems to be the essential function of trans-translation. In Orientia tsutsugamushi (strain Ikeda) (Rickettsia tsutsugamushi), this protein is SsrA-binding protein.